Reading from the N-terminus, the 330-residue chain is Aspartate--ammonia ligase (330 aa).

The protein belongs to the class-II aminoacyl-tRNA synthetase family. AsnA subfamily.

The protein localises to the cytoplasm. The enzyme catalyses L-aspartate + NH4(+) + ATP = L-asparagine + AMP + diphosphate + H(+). Its pathway is amino-acid biosynthesis; L-asparagine biosynthesis; L-asparagine from L-aspartate (ammonia route): step 1/1. The chain is Aspartate--ammonia ligase from Yersinia pseudotuberculosis serotype O:1b (strain IP 31758).